A 392-amino-acid polypeptide reads, in one-letter code: Obg-like ATPase 1 (392 aa).

In terms of domain architecture, OBG-type G spans L21 to C285. Position 30–35 (N30–T35) interacts with ATP. S34 and T55 together coordinate Mg(2+). M233 is an ATP binding site. The TGS domain maps to N306–A389.

It belongs to the TRAFAC class OBG-HflX-like GTPase superfamily. OBG GTPase family. YchF/OLA1 subfamily. Monomer. It depends on Mg(2+) as a cofactor.

It localises to the cytoplasm. The protein localises to the nucleus. Hydrolyzes ATP, and can also hydrolyze GTP with lower efficiency. Has lower affinity for GTP. Negatively regulates the G2/M transition in the cell cycle. The sequence is that of Obg-like ATPase 1 from Schizosaccharomyces pombe (strain 972 / ATCC 24843) (Fission yeast).